Reading from the N-terminus, the 234-residue chain is Large ribosomal subunit protein uL1 (234 aa).

Belongs to the universal ribosomal protein uL1 family. In terms of assembly, part of the 50S ribosomal subunit.

Its function is as follows. Binds directly to 23S rRNA. The L1 stalk is quite mobile in the ribosome, and is involved in E site tRNA release. Protein L1 is also a translational repressor protein, it controls the translation of the L11 operon by binding to its mRNA. This is Large ribosomal subunit protein uL1 from Helicobacter pylori (strain G27).